Reading from the N-terminus, the 365-residue chain is S-adenosylmethionine:tRNA ribosyltransferase-isomerase (365 aa).

This sequence belongs to the QueA family. As to quaternary structure, monomer.

It localises to the cytoplasm. It carries out the reaction 7-aminomethyl-7-carbaguanosine(34) in tRNA + S-adenosyl-L-methionine = epoxyqueuosine(34) in tRNA + adenine + L-methionine + 2 H(+). It participates in tRNA modification; tRNA-queuosine biosynthesis. Functionally, transfers and isomerizes the ribose moiety from AdoMet to the 7-aminomethyl group of 7-deazaguanine (preQ1-tRNA) to give epoxyqueuosine (oQ-tRNA). In Prochlorococcus marinus (strain NATL2A), this protein is S-adenosylmethionine:tRNA ribosyltransferase-isomerase.